The chain runs to 183 residues: tRNA-splicing endonuclease (183 aa).

Residues tyrosine 120, histidine 128, and lysine 159 contribute to the active site.

This sequence belongs to the tRNA-intron endonuclease family. Archaeal short subfamily. Homotetramer; although the tetramer contains four active sites, only two participate in the cleavage. Therefore, it should be considered as a dimer of dimers.

The catalysed reaction is pretRNA = a 3'-half-tRNA molecule with a 5'-OH end + a 5'-half-tRNA molecule with a 2',3'-cyclic phosphate end + an intron with a 2',3'-cyclic phosphate and a 5'-hydroxyl terminus.. Endonuclease that removes tRNA introns. Cleaves pre-tRNA at the 5'- and 3'-splice sites to release the intron. The products are an intron and two tRNA half-molecules bearing 2',3' cyclic phosphate and 5'-OH termini. Recognizes a pseudosymmetric substrate in which 2 bulged loops of 3 bases are separated by a stem of 4 bp. The chain is tRNA-splicing endonuclease from Pyrobaculum islandicum (strain DSM 4184 / JCM 9189 / GEO3).